Here is a 430-residue protein sequence, read N- to C-terminus: ATP-dependent RNA helicase cgh-1 (430 aa).

The short motif at 43-71 is the Q motif element; that stretch reads VEFEDFCLGRDLLMGIFEKGWEKPSPIQE. The 171-residue stretch at 74 to 244 folds into the Helicase ATP-binding domain; sequence IGVALTGQDI…QKHMHKPYEI (171 aa). 87–94 contributes to the ATP binding site; the sequence is AKNGTGKT. The DEAD box motif lies at 192–195; the sequence is DEAD. The Helicase C-terminal domain occupies 254-414; the sequence is GVTQYYAFVQ…PIPKTVDPKL (161 aa).

The protein belongs to the DEAD box helicase family. DDX6/DHH1 subfamily. Interacts with car-1 in a germline ribonucleoprotein complex. Interacts with ifet-1. Interacts with oma-1, which is a component of a ribonucleoprotein complex, in an RNA-dependent manner. In terms of tissue distribution, expression is restricted to two germline precursors Z2 and Z3 in L1 stage hermaphrodites, and is detectable specifically in the gonad at low levels into the L3 stage. Expression is significantly higher during the early L4 stage. In adults, expression remains gonad-specific and was not apparent in the somatically derived uterus. Expressed in germ granules (P granules); when associated with pgl-1.

The protein resides in the cytoplasm. It carries out the reaction ATP + H2O = ADP + phosphate + H(+). Probable RNA helicase required for oocyte and sperm function. Also required to prevent the physiological germline apoptosis mechanism killing essentially all developing oocytes. In Caenorhabditis elegans, this protein is ATP-dependent RNA helicase cgh-1 (cgh-1).